A 213-amino-acid polypeptide reads, in one-letter code: ATP synthase peripheral stalk subunit OSCP, mitochondrial (213 aa).

The transit peptide at 1-23 (MAAPAVSGFSRQVRCFSTSVVRP) directs the protein to the mitochondrion. An SIFI-degron motif is present at residues 5–23 (AVSGFSRQVRCFSTSVVRP). 4 positions are modified to N6-acetyllysine: Lys-54, Lys-60, Lys-70, and Lys-73. Lys-90 bears the N6-succinyllysine mark. Lys-100 and Lys-158 each carry N6-acetyllysine; alternate. N6-succinyllysine; alternate occurs at positions 100 and 158. N6-acetyllysine is present on residues Lys-172, Lys-176, and Lys-192. Residue Lys-199 is modified to N6-succinyllysine.

This sequence belongs to the ATPase delta chain family. As to quaternary structure, component of the ATP synthase complex composed at least of ATP5F1A/subunit alpha, ATP5F1B/subunit beta, ATP5MC1/subunit c (homooctomer), MT-ATP6/subunit a, MT-ATP8/subunit 8, ATP5ME/subunit e, ATP5MF/subunit f, ATP5MG/subunit g, ATP5MK/subunit k, ATP5MJ/subunit j, ATP5F1C/subunit gamma, ATP5F1D/subunit delta, ATP5F1E/subunit epsilon, ATP5PF/subunit F6, ATP5PB/subunit b, ATP5PD/subunit d, ATP5PO/subunit OSCP. ATP synthase complex consists of a soluble F(1) head domain (subunits alpha(3) and beta(3)) - the catalytic core - and a membrane F(0) domain - the membrane proton channel (subunits c, a, 8, e, f, g, k and j). These two domains are linked by a central stalk (subunits gamma, delta, and epsilon) rotating inside the F1 region and a stationary peripheral stalk (subunits F6, b, d, and OSCP). Post-translationally, in response to mitochondrial stress, the precursor protein is ubiquitinated by the SIFI complex in the cytoplasm before mitochondrial import, leading to its degradation. Within the SIFI complex, UBR4 initiates ubiquitin chain that are further elongated or branched by KCMF1.

It localises to the mitochondrion. The protein resides in the mitochondrion inner membrane. In terms of biological role, subunit OSCP, of the mitochondrial membrane ATP synthase complex (F(1)F(0) ATP synthase or Complex V) that produces ATP from ADP in the presence of a proton gradient across the membrane which is generated by electron transport complexes of the respiratory chain. ATP synthase complex consist of a soluble F(1) head domain - the catalytic core - and a membrane F(1) domain - the membrane proton channel. These two domains are linked by a central stalk rotating inside the F(1) region and a stationary peripheral stalk. During catalysis, ATP synthesis in the catalytic domain of F(1) is coupled via a rotary mechanism of the central stalk subunits to proton translocation. In vivo, can only synthesize ATP although its ATP hydrolase activity can be activated artificially in vitro. Part of the complex F(0) domain. Part of the complex F(0) domain and the peripheric stalk, which acts as a stator to hold the catalytic alpha(3)beta(3) subcomplex and subunit a/ATP6 static relative to the rotary elements. In Rhinolophus ferrumequinum (Greater horseshoe bat), this protein is ATP synthase peripheral stalk subunit OSCP, mitochondrial.